The chain runs to 321 residues: Probable cell division protein WhiA (321 aa).

The H-T-H motif DNA-binding region spans 275-308; that stretch reads SLDELGRLADPPMTKDAVAGRIRRLLAMADKRAA.

Belongs to the WhiA family.

In terms of biological role, involved in cell division and chromosome segregation. The polypeptide is Probable cell division protein WhiA (Micrococcus luteus (strain ATCC 4698 / DSM 20030 / JCM 1464 / CCM 169 / CCUG 5858 / IAM 1056 / NBRC 3333 / NCIMB 9278 / NCTC 2665 / VKM Ac-2230) (Micrococcus lysodeikticus)).